The primary structure comprises 205 residues: Protein N-terminal glutamine amidohydrolase (205 aa).

Active-site residues include cysteine 28, histidine 81, and aspartate 97.

Belongs to the NTAQ1 family. In terms of assembly, monomer.

It localises to the cytoplasm. Its subcellular location is the cytosol. The protein localises to the nucleus. It catalyses the reaction N-terminal L-glutaminyl-[protein] + H2O = N-terminal L-glutamyl-[protein] + NH4(+). In terms of biological role, mediates the side-chain deamidation of N-terminal glutamine residues to glutamate, an important step in N-end rule pathway of protein degradation. Conversion of the resulting N-terminal glutamine to glutamate renders the protein susceptible to arginylation, polyubiquitination and degradation as specified by the N-end rule. Does not act on substrates with internal or C-terminal glutamine and does not act on non-glutamine residues in any position. Does not deaminate acetylated N-terminal glutamine. With the exception of proline, all tested second-position residues on substrate peptides do not greatly influence the activity. In contrast, a proline at position 2, virtually abolishes deamidation of N-terminal glutamine. The chain is Protein N-terminal glutamine amidohydrolase from Homo sapiens (Human).